A 117-amino-acid polypeptide reads, in one-letter code: Putative cysteine proteinase inhibitor 7 (117 aa).

An N-terminal signal peptide occupies residues 1-24; the sequence is MTMRTSSLLLAAVAVVAIVAGATA. The Cystatin domain maps to 28–84; sequence GSWEPVDINDPHVQELGRWAVAEEDRGVAAGGLTFERVTDGEKQVVAGVNYRLTLEA. The Secondary area of contact motif lies at 71–75; it reads QVVAG.

This sequence belongs to the cystatin family. Phytocystatin subfamily.

The protein localises to the secreted. In terms of biological role, specific inhibitor of cysteine proteinases. Probably involved in the regulation of endogenous processes and in defense against pests and pathogens. This is Putative cysteine proteinase inhibitor 7 from Oryza sativa subsp. japonica (Rice).